The sequence spans 200 residues: Holliday junction resolvase RecU (200 aa).

Residues 1–24 (MTIRYPNGKRYDQASQPHKTPIKK) form a disordered region. Mg(2+) is bound by residues Thr-85, Asp-87, Glu-100, and Gln-119.

The protein belongs to the RecU family. Requires Mg(2+) as cofactor.

Its subcellular location is the cytoplasm. The enzyme catalyses Endonucleolytic cleavage at a junction such as a reciprocal single-stranded crossover between two homologous DNA duplexes (Holliday junction).. In terms of biological role, endonuclease that resolves Holliday junction intermediates in genetic recombination. Cleaves mobile four-strand junctions by introducing symmetrical nicks in paired strands. Promotes annealing of linear ssDNA with homologous dsDNA. Required for DNA repair, homologous recombination and chromosome segregation. The protein is Holliday junction resolvase RecU of Bacillus mycoides (strain KBAB4) (Bacillus weihenstephanensis).